We begin with the raw amino-acid sequence, 440 residues long: Methylenetetrahydrofolate--tRNA-(uracil-5-)-methyltransferase TrmFO (440 aa).

An FAD-binding site is contributed by G14 to G19.

The protein belongs to the MnmG family. TrmFO subfamily. FAD is required as a cofactor.

The protein resides in the cytoplasm. The catalysed reaction is uridine(54) in tRNA + (6R)-5,10-methylene-5,6,7,8-tetrahydrofolate + NADH + H(+) = 5-methyluridine(54) in tRNA + (6S)-5,6,7,8-tetrahydrofolate + NAD(+). It catalyses the reaction uridine(54) in tRNA + (6R)-5,10-methylene-5,6,7,8-tetrahydrofolate + NADPH + H(+) = 5-methyluridine(54) in tRNA + (6S)-5,6,7,8-tetrahydrofolate + NADP(+). Its function is as follows. Catalyzes the folate-dependent formation of 5-methyl-uridine at position 54 (M-5-U54) in all tRNAs. The polypeptide is Methylenetetrahydrofolate--tRNA-(uracil-5-)-methyltransferase TrmFO (Bdellovibrio bacteriovorus (strain ATCC 15356 / DSM 50701 / NCIMB 9529 / HD100)).